We begin with the raw amino-acid sequence, 852 residues long: Disks large homolog 2 (852 aa).

Residues Cys-5 and Cys-7 are each lipidated (S-palmitoyl cysteine). Ser-28 bears the Phosphoserine mark. Position 58 is a phosphotyrosine (Tyr-58). Ser-65 carries the post-translational modification Phosphoserine. 2 consecutive PDZ domains span residues 98-184 (EITL…VRRR) and 193-279 (EIKL…VGKP). 6 positions are modified to phosphoserine: Ser-307, Ser-328, Ser-360, Ser-365, Ser-406, and Ser-414. Positions 421 to 501 (KVVLHKGSTG…QTVTIIAQYQ (81 aa)) constitute a PDZ 3 domain. Tyr-505 is modified (phosphotyrosine). A phosphoserine mark is found at Ser-528, Ser-530, and Ser-553. In terms of domain architecture, SH3 spans 536 to 606 (KRSLYVRAMF…PSKRRVERKE (71 aa)). The region spanning 662–837 (TRPVIILGPM…IYNQCKLVIE (176 aa)) is the Guanylate kinase-like domain. Residues Tyr-732 and Tyr-737 each carry the phosphotyrosine modification.

The protein belongs to the MAGUK family. Interacts through its PDZ domains with NETO1. Interacts with NOS1/nNOS through second PDZ domain. Interacts with KCNJ2/Kir2.1 (via C-terminus) through one of its PDZ domains. Interacts with KCNJ4. Interacts with FRMPD4 (via C-terminus). Interacts with LRFN1. Interacts with LRFN2 and LRFN4. Interacts with FASLG. Interacts with ADAM22. Interacts with DGKI (via PDZ-binding motif). Post-translationally, palmitoylation of isoform 1 and isoform 2 is not required for targeting to postsynaptic density. Detected in juxtaparanodal zones in the central nervous system and at nerve terminal plexuses of basket cells in the cerebellum (at protein level). Brain. High levels in cerebellar Purkinje cells. Expressed in pyramidal cells of the Ammons's horn and granular cells of the dentate gyrus in the hippocampus as well as cerebral cortex and striatum. High levels in dorsal horn of spinal cord.

The protein resides in the cell membrane. It localises to the postsynaptic density. Its subcellular location is the synapse. The protein localises to the cell projection. It is found in the axon. The protein resides in the membrane. It localises to the perikaryon. In terms of biological role, required for perception of chronic pain through NMDA receptor signaling. Regulates surface expression of NMDA receptors in dorsal horn neurons of the spinal cord. Interacts with the cytoplasmic tail of NMDA receptor subunits as well as inward rectifying potassium channels. Involved in regulation of synaptic stability at cholinergic synapses. Part of the postsynaptic protein scaffold of excitatory synapses. This Rattus norvegicus (Rat) protein is Disks large homolog 2 (Dlg2).